Here is a 406-residue protein sequence, read N- to C-terminus: Tyrosine--tRNA ligase (406 aa).

Position 35 (Tyr35) interacts with L-tyrosine. Residues Pro40–His49 carry the 'HIGH' region motif. Positions 168 and 172 each coordinate L-tyrosine. The short motif at Lys228–Thr232 is the 'KMSKS' region element. ATP is bound at residue Lys231. An S4 RNA-binding domain is found at Ser340 to Val404.

Belongs to the class-I aminoacyl-tRNA synthetase family. TyrS type 1 subfamily. Homodimer.

The protein localises to the cytoplasm. The enzyme catalyses tRNA(Tyr) + L-tyrosine + ATP = L-tyrosyl-tRNA(Tyr) + AMP + diphosphate + H(+). In terms of biological role, catalyzes the attachment of tyrosine to tRNA(Tyr) in a two-step reaction: tyrosine is first activated by ATP to form Tyr-AMP and then transferred to the acceptor end of tRNA(Tyr). The protein is Tyrosine--tRNA ligase of Clostridium perfringens (strain ATCC 13124 / DSM 756 / JCM 1290 / NCIMB 6125 / NCTC 8237 / Type A).